Here is a 305-residue protein sequence, read N- to C-terminus: Porphobilinogen deaminase (305 aa).

Position 243 is an S-(dipyrrolylmethanemethyl)cysteine (C243).

It belongs to the HMBS family. In terms of assembly, monomer. Requires dipyrromethane as cofactor.

It carries out the reaction 4 porphobilinogen + H2O = hydroxymethylbilane + 4 NH4(+). The protein operates within porphyrin-containing compound metabolism; protoporphyrin-IX biosynthesis; coproporphyrinogen-III from 5-aminolevulinate: step 2/4. In terms of biological role, tetrapolymerization of the monopyrrole PBG into the hydroxymethylbilane pre-uroporphyrinogen in several discrete steps. This is Porphobilinogen deaminase from Limosilactobacillus reuteri (strain DSM 20016) (Lactobacillus reuteri).